The following is a 202-amino-acid chain: Matrix protein (202 aa).

Residues 35-38 (PPEY) carry the PPXY motif motif. The essential for glycoprotein binding stretch occupies residues 115–151 (KLRRTFIFQWADSRGPLEGEELEYSQEITWDDDTEFV).

The protein belongs to the lyssavirus matrix protein family. In terms of assembly, homomultimer. Interacts with nucleoprotein and with the cytoplasmic domain of glycoprotein. Interacts with host ATP6V1A; this interaction plays an important role in virion uncoating after viral entry.

Its subcellular location is the virion membrane. It is found in the host endomembrane system. The protein resides in the host cytoplasm. Its function is as follows. Plays a major role in assembly, budding and uncoating of virion after membrane fusion. Completely covers the ribonucleoprotein coil and keep it in condensed bullet-shaped form. Inhibits viral transcription and stimulates replication. Plays a major role in early induction of TRAIL-mediated apoptosis in infected neurons. Inhibits the integrated stress response (ISR) in the infected cell by blocking the formation of stress granules. The protein is Matrix protein (M) of Rabies virus (strain ERA) (RABV).